The sequence spans 233 residues: Fibrillarin-like rRNA/tRNA 2'-O-methyltransferase (233 aa).

Residues 89–90 (TT), 108–109 (EF), 133–134 (DA), and 153–156 (DIAQ) contribute to the S-adenosyl-L-methionine site.

It belongs to the methyltransferase superfamily. Fibrillarin family. Interacts with nop5. Component of box C/D small ribonucleoprotein (sRNP) particles that contain rpl7ae, FlpA and nop5, plus a guide RNA.

In terms of biological role, involved in pre-rRNA and tRNA processing. Utilizes the methyl donor S-adenosyl-L-methionine to catalyze the site-specific 2'-hydroxyl methylation of ribose moieties in rRNA and tRNA. Site specificity is provided by a guide RNA that base pairs with the substrate. Methylation occurs at a characteristic distance from the sequence involved in base pairing with the guide RNA. In Sulfurisphaera tokodaii (strain DSM 16993 / JCM 10545 / NBRC 100140 / 7) (Sulfolobus tokodaii), this protein is Fibrillarin-like rRNA/tRNA 2'-O-methyltransferase.